The following is a 251-amino-acid chain: Hydroxyacylglutathione hydrolase (251 aa).

Positions 58, 60, 62, 63, 116, 135, and 173 each coordinate Zn(2+).

It belongs to the metallo-beta-lactamase superfamily. Glyoxalase II family. Monomer. It depends on Zn(2+) as a cofactor.

It catalyses the reaction an S-(2-hydroxyacyl)glutathione + H2O = a 2-hydroxy carboxylate + glutathione + H(+). It participates in secondary metabolite metabolism; methylglyoxal degradation; (R)-lactate from methylglyoxal: step 2/2. In terms of biological role, thiolesterase that catalyzes the hydrolysis of S-D-lactoyl-glutathione to form glutathione and D-lactic acid. The polypeptide is Hydroxyacylglutathione hydrolase (Bdellovibrio bacteriovorus (strain ATCC 15356 / DSM 50701 / NCIMB 9529 / HD100)).